Here is a 38-residue protein sequence, read N- to C-terminus: Cytochrome b6-f complex subunit 5 (38 aa).

The helical transmembrane segment at 5–25 (LLSGIVLGLIPITLAGLFVTA) threads the bilayer.

It belongs to the PetG family. In terms of assembly, the 4 large subunits of the cytochrome b6-f complex are cytochrome b6, subunit IV (17 kDa polypeptide, PetD), cytochrome f and the Rieske protein, while the 4 small subunits are PetG, PetL, PetM and PetN. The complex functions as a dimer.

It localises to the plastid. The protein resides in the chloroplast thylakoid membrane. Functionally, component of the cytochrome b6-f complex, which mediates electron transfer between photosystem II (PSII) and photosystem I (PSI), cyclic electron flow around PSI, and state transitions. PetG is required for either the stability or assembly of the cytochrome b6-f complex. This is Cytochrome b6-f complex subunit 5 from Adiantum capillus-veneris (Maidenhair fern).